Here is a 355-residue protein sequence, read N- to C-terminus: S-adenosylmethionine:tRNA ribosyltransferase-isomerase (355 aa).

This sequence belongs to the QueA family. As to quaternary structure, monomer.

The protein localises to the cytoplasm. It catalyses the reaction 7-aminomethyl-7-carbaguanosine(34) in tRNA + S-adenosyl-L-methionine = epoxyqueuosine(34) in tRNA + adenine + L-methionine + 2 H(+). Its pathway is tRNA modification; tRNA-queuosine biosynthesis. Transfers and isomerizes the ribose moiety from AdoMet to the 7-aminomethyl group of 7-deazaguanine (preQ1-tRNA) to give epoxyqueuosine (oQ-tRNA). The polypeptide is S-adenosylmethionine:tRNA ribosyltransferase-isomerase (Burkholderia ambifaria (strain ATCC BAA-244 / DSM 16087 / CCUG 44356 / LMG 19182 / AMMD) (Burkholderia cepacia (strain AMMD))).